The following is a 230-amino-acid chain: Ureidoacrylate amidohydrolase RutB (230 aa).

The Proton acceptor role is filled by D24. K133 is a catalytic residue. Residue C166 is the Nucleophile of the active site.

It belongs to the isochorismatase family. RutB subfamily.

The enzyme catalyses (Z)-3-ureidoacrylate + H2O + H(+) = (Z)-3-aminoacrylate + NH4(+) + CO2. The catalysed reaction is (Z)-3-ureidoacrylate + H2O = (Z)-3-aminoacrylate + carbamate + H(+). It catalyses the reaction (Z)-2-methylureidoacrylate + H2O + H(+) = (Z)-2-methylaminoacrylate + NH4(+) + CO2. Hydrolyzes ureidoacrylate to form aminoacrylate and carbamate. The carbamate hydrolyzes spontaneously, thereby releasing one of the nitrogen atoms of the pyrimidine ring as ammonia and one of its carbon atoms as CO2. This is Ureidoacrylate amidohydrolase RutB from Escherichia coli O6:K15:H31 (strain 536 / UPEC).